The following is a 243-amino-acid chain: 23S rRNA (guanosine-2'-O-)-methyltransferase RlmB (243 aa).

S-adenosyl-L-methionine contacts are provided by Gly-196, Ile-216, and Leu-225.

It belongs to the class IV-like SAM-binding methyltransferase superfamily. RNA methyltransferase TrmH family. RlmB subfamily. As to quaternary structure, homodimer.

The protein resides in the cytoplasm. It catalyses the reaction guanosine(2251) in 23S rRNA + S-adenosyl-L-methionine = 2'-O-methylguanosine(2251) in 23S rRNA + S-adenosyl-L-homocysteine + H(+). In terms of biological role, specifically methylates the ribose of guanosine 2251 in 23S rRNA. This is 23S rRNA (guanosine-2'-O-)-methyltransferase RlmB from Salmonella typhimurium (strain LT2 / SGSC1412 / ATCC 700720).